The chain runs to 318 residues: tRNA U34 carboxymethyltransferase (318 aa).

Carboxy-S-adenosyl-L-methionine-binding positions include K88, W102, K107, G126, 176–177 (LE), M192, Y196, and R311.

Belongs to the class I-like SAM-binding methyltransferase superfamily. CmoB family. As to quaternary structure, homotetramer.

The catalysed reaction is carboxy-S-adenosyl-L-methionine + 5-hydroxyuridine(34) in tRNA = 5-carboxymethoxyuridine(34) in tRNA + S-adenosyl-L-homocysteine + H(+). Functionally, catalyzes carboxymethyl transfer from carboxy-S-adenosyl-L-methionine (Cx-SAM) to 5-hydroxyuridine (ho5U) to form 5-carboxymethoxyuridine (cmo5U) at position 34 in tRNAs. This Pseudomonas putida (strain GB-1) protein is tRNA U34 carboxymethyltransferase.